A 209-amino-acid chain; its full sequence is Uracil phosphoribosyltransferase (209 aa).

5-phospho-alpha-D-ribose 1-diphosphate contacts are provided by residues Arg79, Arg104, and 131-139 (DPMLATGGS). Residues Ile194 and 199–201 (GDA) contribute to the uracil site. Asp200 lines the 5-phospho-alpha-D-ribose 1-diphosphate pocket.

This sequence belongs to the UPRTase family. The cofactor is Mg(2+).

The enzyme catalyses UMP + diphosphate = 5-phospho-alpha-D-ribose 1-diphosphate + uracil. It participates in pyrimidine metabolism; UMP biosynthesis via salvage pathway; UMP from uracil: step 1/1. Its activity is regulated as follows. Allosterically activated by GTP. Its function is as follows. Catalyzes the conversion of uracil and 5-phospho-alpha-D-ribose 1-diphosphate (PRPP) to UMP and diphosphate. This is Uracil phosphoribosyltransferase from Bacillus velezensis (strain DSM 23117 / BGSC 10A6 / LMG 26770 / FZB42) (Bacillus amyloliquefaciens subsp. plantarum).